The following is a 37-amino-acid chain: Large ribosomal subunit protein bL36 (37 aa).

This sequence belongs to the bacterial ribosomal protein bL36 family.

This Streptomyces avermitilis (strain ATCC 31267 / DSM 46492 / JCM 5070 / NBRC 14893 / NCIMB 12804 / NRRL 8165 / MA-4680) protein is Large ribosomal subunit protein bL36.